The following is a 360-amino-acid chain: Phospho-N-acetylmuramoyl-pentapeptide-transferase (360 aa).

Helical transmembrane passes span 25–45 (RGILGVLTALILALCLGPWMI), 73–93 (TMGGALILSAIAISTLLWADL), 97–117 (YVWTVLAVTLLFGAIGWVDDY), 132–152 (WKYFWQSVFGLGAALFLYMTA), 167–187 (TIEIPLGAAFIVLTYFVIVGS), 199–219 (GLAIMPTVMVGGALGIFCYLS), 236–256 (AGELIVFCGALIGAGLGFLWF), 263–283 (VFMGDVGALALGAALGTIAVI), 288–308 (VVLFIMGGVFVMETLSVMIQV), and 338–358 (VIVRFWIITVVLVLIGLATLK).

The protein belongs to the glycosyltransferase 4 family. MraY subfamily. Mg(2+) serves as cofactor.

The protein resides in the cell inner membrane. The catalysed reaction is UDP-N-acetyl-alpha-D-muramoyl-L-alanyl-gamma-D-glutamyl-meso-2,6-diaminopimeloyl-D-alanyl-D-alanine + di-trans,octa-cis-undecaprenyl phosphate = di-trans,octa-cis-undecaprenyl diphospho-N-acetyl-alpha-D-muramoyl-L-alanyl-D-glutamyl-meso-2,6-diaminopimeloyl-D-alanyl-D-alanine + UMP. It participates in cell wall biogenesis; peptidoglycan biosynthesis. Its function is as follows. Catalyzes the initial step of the lipid cycle reactions in the biosynthesis of the cell wall peptidoglycan: transfers peptidoglycan precursor phospho-MurNAc-pentapeptide from UDP-MurNAc-pentapeptide onto the lipid carrier undecaprenyl phosphate, yielding undecaprenyl-pyrophosphoryl-MurNAc-pentapeptide, known as lipid I. In Azotobacter vinelandii (strain DJ / ATCC BAA-1303), this protein is Phospho-N-acetylmuramoyl-pentapeptide-transferase.